Consider the following 952-residue polypeptide: Ubiquitin carboxyl-terminal hydrolase 15 (952 aa).

N-acetylalanine is present on Ala2. Positions 2-223 are mediates interaction with SART3; that stretch reads AEGGAADLDT…KNEDGTWPRG (222 aa). Residues 7-118 enclose the DUSP domain; the sequence is ADLDTQRSDI…GQEPIARKVV (112 aa). Residues 260 to 904 enclose the USP domain; sequence CGLSNLGNTC…AAYVLFYQRQ (645 aa). Cys269 functions as the Nucleophile in the catalytic mechanism. Thr573 is subject to Phosphothreonine. A disordered region spans residues 597 to 665; the sequence is ETDGPLRCCE…GGDNDSENGL (69 aa). The span at 627–644 shows a compositional bias: acidic residues; that stretch reads METDEPDDESSQDQELPS. His862 acts as the Proton acceptor in catalysis. The interval 923 to 952 is disordered; sequence SAATGVPLESDEDSNDNDNDLENENCMHTN. Positions 931 to 945 are enriched in acidic residues; sequence ESDEDSNDNDNDLEN. Phosphoserine is present on residues Ser932 and Ser936.

The protein belongs to the peptidase C19 family. In terms of assembly, a homodimer structure has been reported; however it is unclear whether the protein form a homodimer in vivo. Identified in a complex with the COP9 signalosome complex (CSN). Interacts with SMAD1, SMAD2 and SMAD3; the interaction is direct. Forms a complex with SMURF2 and SMAD7. Interacts with TGFBR1. Interacts with SART3; the interaction is direct. May interact with RNF20 and RNF40. May interact with PRKN. Interacts with INCA1. In terms of processing, phosphorylated. Phosphorylation protects against ubiquitination and subsequent degradation by the proteasome. Ubiquitinated, leading to degradation by the proteasome. As to expression, highly expressed in testis and spleen, and at lower level in other tissues.

The protein localises to the cytoplasm. It is found in the nucleus. The protein resides in the mitochondrion. The enzyme catalyses Thiol-dependent hydrolysis of ester, thioester, amide, peptide and isopeptide bonds formed by the C-terminal Gly of ubiquitin (a 76-residue protein attached to proteins as an intracellular targeting signal).. In terms of biological role, hydrolase that removes conjugated ubiquitin from target proteins and regulates various pathways such as the TGF-beta receptor signaling, NF-kappa-B and RNF41/NRDP1-PRKN pathways. Acts as a key regulator of TGF-beta receptor signaling pathway, but the precise mechanism is still unclear: according to a report, acts by promoting deubiquitination of monoubiquitinated R-SMADs (SMAD1, SMAD2 and/or SMAD3), thereby alleviating inhibition of R-SMADs and promoting activation of TGF-beta target genes. According to another reports, regulates the TGF-beta receptor signaling pathway by mediating deubiquitination and stabilization of TGFBR1, leading to an enhanced TGF-beta signal. Able to mediate deubiquitination of monoubiquitinated substrates, 'Lys-27'-, 'Lys-48'- and 'Lys-63'-linked polyubiquitin chains. May also regulate gene expression and/or DNA repair through the deubiquitination of histone H2B. Acts as an inhibitor of mitophagy by counteracting the action of parkin (PRKN): hydrolyzes cleavage of 'Lys-48'- and 'Lys-63'-linked polyubiquitin chains attached by parkin on target proteins such as MFN2, thereby reducing parkin's ability to drive mitophagy. Acts as an associated component of COP9 signalosome complex (CSN) and regulates different pathways via this association: regulates NF-kappa-B by mediating deubiquitination of NFKBIA and deubiquitinates substrates bound to VCP. Involved in endosome organization by mediating deubiquitination of SQSTM1: ubiquitinated SQSTM1 forms a molecular bridge that restrains cognate vesicles in the perinuclear region and its deubiquitination releases target vesicles for fast transport into the cell periphery. Acts as a negative regulator of antifungal immunity by mediating 'Lys-27'-linked deubiquitination of CARD9, thereby inactivating CARD9. The protein is Ubiquitin carboxyl-terminal hydrolase 15 (Usp15) of Rattus norvegicus (Rat).